A 142-amino-acid chain; its full sequence is Small ribosomal subunit protein bS18m (142 aa).

This sequence belongs to the bacterial ribosomal protein bS18 family. As to quaternary structure, component of the mitochondrial small ribosomal subunit (mt-SSU). Mature mammalian 55S mitochondrial ribosomes consist of a small (28S) and a large (39S) subunit. The 28S small subunit contains a 12S ribosomal RNA (12S mt-rRNA) and 30 different proteins. The 39S large subunit contains a 16S rRNA (16S mt-rRNA), a copy of mitochondrial valine transfer RNA (mt-tRNA(Val)), which plays an integral structural role, and 52 different proteins. bS18m has a zinc binding site.

Its subcellular location is the mitochondrion. This Homo sapiens (Human) protein is Small ribosomal subunit protein bS18m (MRPS18C).